A 248-amino-acid polypeptide reads, in one-letter code: Meiotic drive suppressor wtf1 (248 aa).

Residues 30 to 68 (LLPEYNSDEESTLPPYSDHARVSNPPNTHRENHSSGTTD) are disordered. The next 4 membrane-spanning stretches (helical) occupy residues 73 to 93 (FLIKLLISFTSIILFNAPAVC), 110 to 130 (WTLIGFWCASSLIIFTFSWYF), 152 to 172 (IPMAFSEVFLFNILVGSPRVT), and 186 to 206 (SLADHIIFAILSILVFIVETV).

Belongs to the WTF family. In terms of assembly, homomer. Interacts with other proteins that exhibit high sequence similarity.

The protein resides in the spore membrane. It localises to the vacuole membrane. Acts as a suppressor component of the dual wtf meiotic drive system, and can suppress but not confer meiotic drive by compatible poisons. Wtf meiotic drive systems promote unequal transmission of alleles from the parental zygote to progeny spores by encoding a poison and an antidote from the same locus; the poison is trans-acting and forms toxic aggregates in all spores within an ascus, wherease the antidote is spore-specific and targets aggregates for degradation by the vacuole. Meiotic drive by wtf systems therefore lead to poisoning of all progeny that do not inherit the dual poison/antidote allele, or express a compatible antidote. In Schizosaccharomyces pombe (Fission yeast), this protein is Meiotic drive suppressor wtf1.